Consider the following 111-residue polypeptide: Ribulose bisphosphate carboxylase small subunit (111 aa).

It belongs to the RuBisCO small chain family. In terms of assembly, heterohexadecamer of 8 large and 8 small subunits. The CcmM short form purifies from carboxysomes in complex with both RuBisCO subunits; a second complex with full-length CcmM and RuBisCO also includes carbonic anhydrase (CA, ccaA). RuBisCO-CcmM complexes are probably associated with the carboxysome shell. Isolated reduced and oxidized SSUL1 binds holo-RuBisCO (RbcL(8)-RbcS(8)) but not either subunit octamer alone; RuBisCO has a higher affinity for reduced SSUL1.

It is found in the carboxysome. Functionally, ruBisCO catalyzes two reactions: the carboxylation of D-ribulose 1,5-bisphosphate, the primary event in carbon dioxide fixation, as well as the oxidative fragmentation of the pentose substrate in the photorespiration process. Both reactions occur simultaneously and in competition at the same active site. In terms of biological role, beta-carboxysome assembly initiates when soluble RuBisCO aggregates is condensed into a liquid matrix in a pre-carboxysome by the RbcS-like domains of probably both CcmM58 and CcmM35. CcmN interacts with the N-terminus of CcmM58, and then recruits the CcmK2 major shell protein via CcmN's encapsulation peptide. Shell formation requires CcmK proteins and CcmO. CcmL caps the otherwise elongated carboxysome. Once fully encapsulated carboxysomes are formed, they migrate within the cell probably via interactions with the cytoskeleton. The sequence is that of Ribulose bisphosphate carboxylase small subunit from Synechococcus elongatus (strain ATCC 33912 / PCC 7942 / FACHB-805) (Anacystis nidulans R2).